The following is a 205-amino-acid chain: Casparian strip membrane protein 4 (205 aa).

At 1–58 (MDIEKTGSRREEEEPIVQKPKLEKGKGKAHVFAPPMNYSRIMEKHKQEKVSMAGWKRG) the chain is on the cytoplasmic side. Residues 59–79 (VAIFDFVLRLIAAITAMAAAA) traverse the membrane as a helical segment. The Extracellular portion of the chain corresponds to 80–109 (KMATTEETLPFFTQFLQFSADYTDLPTLSS). Residues 110–130 (FVIVNSIVGGYLTLSLPFSIV) form a helical membrane-spanning segment. Residues 131 to 148 (CILRPLAVPPRLFLILCD) are Cytoplasmic-facing. The helical transmembrane segment at 149 to 169 (TAMMGLTMVAASASAAIVYLA) threads the bilayer. Residues 170 to 205 (HNGNSSSNWLPVCQQFGDFCKERVAPWWLPLLQRLF) are Extracellular-facing. The N-linked (GlcNAc...) asparagine glycan is linked to asparagine 173.

The protein belongs to the Casparian strip membrane proteins (CASP) family. In terms of assembly, homodimer and heterodimers.

The protein localises to the cell membrane. Its function is as follows. Regulates membrane-cell wall junctions and localized cell wall deposition. Required for establishment of the Casparian strip membrane domain (CSD) and the subsequent formation of Casparian strips, a cell wall modification of the root endodermis that determines an apoplastic barrier between the intraorganismal apoplasm and the extraorganismal apoplasm and prevents lateral diffusion. The protein is Casparian strip membrane protein 4 of Raphanus sativus (Radish).